We begin with the raw amino-acid sequence, 174 residues long: NADH-quinone oxidoreductase subunit B 2 (174 aa).

Cys53, Cys54, Cys118, and Cys148 together coordinate [4Fe-4S] cluster.

The protein belongs to the complex I 20 kDa subunit family. NDH-1 is composed of 14 different subunits. Subunits NuoB, C, D, E, F, and G constitute the peripheral sector of the complex. The cofactor is [4Fe-4S] cluster.

The protein resides in the cell inner membrane. It carries out the reaction a quinone + NADH + 5 H(+)(in) = a quinol + NAD(+) + 4 H(+)(out). Its function is as follows. NDH-1 shuttles electrons from NADH, via FMN and iron-sulfur (Fe-S) centers, to quinones in the respiratory chain. Couples the redox reaction to proton translocation (for every two electrons transferred, four hydrogen ions are translocated across the cytoplasmic membrane), and thus conserves the redox energy in a proton gradient. This Cereibacter sphaeroides (strain ATCC 17025 / ATH 2.4.3) (Rhodobacter sphaeroides) protein is NADH-quinone oxidoreductase subunit B 2.